The sequence spans 128 residues: Small ribosomal subunit protein bS6 (128 aa).

It belongs to the bacterial ribosomal protein bS6 family.

Binds together with bS18 to 16S ribosomal RNA. The protein is Small ribosomal subunit protein bS6 (rpsF) of Thermotoga maritima (strain ATCC 43589 / DSM 3109 / JCM 10099 / NBRC 100826 / MSB8).